We begin with the raw amino-acid sequence, 133 residues long: MKTIRVSVVTPDGPVYEGDVEMVSVKAKSGELGILPGHIPLVAPLEISAARLKKDGKTSYVAVSGGFLEVRPDKVTILAQAAERAEDIDVLRAKAAKERAERRLQSQQDDIDFKRAELALKRAMNRLNVAGMK.

The protein belongs to the ATPase epsilon chain family. As to quaternary structure, F-type ATPases have 2 components, CF(1) - the catalytic core - and CF(0) - the membrane proton channel. CF(1) has five subunits: alpha(3), beta(3), gamma(1), delta(1), epsilon(1). CF(0) has three main subunits: a, b and c.

The protein localises to the cell membrane. Its function is as follows. Produces ATP from ADP in the presence of a proton gradient across the membrane. The chain is ATP synthase epsilon chain from Geobacillus thermodenitrificans (strain NG80-2).